Reading from the N-terminus, the 166-residue chain is Putative esterase sll0410 (166 aa).

Residue Asp45 is part of the active site.

It belongs to the 4-hydroxybenzoyl-CoA thioesterase family.

The chain is Putative esterase sll0410 from Synechocystis sp. (strain ATCC 27184 / PCC 6803 / Kazusa).